The primary structure comprises 102 residues: Protein translation factor SUI1 homolog (102 aa).

Belongs to the SUI1 family.

This chain is Protein translation factor SUI1 homolog, found in Methanosarcina acetivorans (strain ATCC 35395 / DSM 2834 / JCM 12185 / C2A).